Consider the following 777-residue polypeptide: Glucocorticoid receptor (777 aa).

The segment covering 1-14 (MDSKESLTPGREEN) has biased composition (basic and acidic residues). The tract at residues 1 to 23 (MDSKESLTPGREENPSSVLAQER) is disordered. A modulating region spans residues 1-420 (MDSKESLTPG…TATTGPPPKL (420 aa)). A Phosphothreonine modification is found at Thr8. Residue Arg23 is modified to Omega-N-methylarginine. Phosphoserine occurs at positions 45, 113, 134, and 141. The segment covering 130–140 (NRSTSVPENPK) has biased composition (polar residues). Positions 130–183 (NRSTSVPENPKSSASTAVSAAPTEKEFPKTHSDISSEQQHLKGQTGTNGGNVKL) are disordered. Over residues 141–150 (SSASTAVSAA) the composition is skewed to low complexity. Basic and acidic residues predominate over residues 152–163 (TEKEFPKTHSDI). Polar residues predominate over residues 164-174 (SSEQQHLKGQT). Ser203, Ser211, and Ser226 each carry phosphoserine. Lys258 participates in a covalent cross-link: Glycyl lysine isopeptide (Lys-Gly) (interchain with G-Cter in SUMO2). At Ser267 the chain carries Phosphoserine. Glycyl lysine isopeptide (Lys-Gly) (interchain with G-Cter in SUMO); alternate cross-links involve residues Lys277 and Lys293. Residues Lys277 and Lys293 each participate in a glycyl lysine isopeptide (Lys-Gly) (interchain with G-Cter in SUMO2); alternate cross-link. Low complexity predominate over residues 394-414 (SSPSMRPDVSSPPSSSSTATT). The segment at 394-415 (SSPSMRPDVSSPPSSSSTATTG) is disordered. Ser404 carries the post-translational modification Phosphoserine. A Glycyl lysine isopeptide (Lys-Gly) (interchain with G-Cter in ubiquitin) cross-link involves residue Lys419. 2 NR C4-type zinc fingers span residues 421 to 441 (CLVCSDEASGCHYGVLTCGSC) and 457 to 476 (CAGRNDCIIDKIRRKNCPAC). Positions 421–486 (CLVCSDEASG…RYRKCLQAGM (66 aa)) form a DNA-binding region, nuclear receptor. N6-acetyllysine occurs at positions 480, 492, 494, and 495. Residues 485-777 (GMNLEARKTK…NIKKLLFHQK (293 aa)) are interaction with CLOCK. Residues 487-523 (NLEARKTKKKIKGIQQATTGVSQETPENPANKTIVPA) form a hinge region. Positions 524–758 (TLPQLTPTLV…FPEMLAEIIT (235 aa)) constitute an NR LBD domain. The interval 532 to 697 (LVSLLEVIEP…EIRMTYIKEL (166 aa)) is interaction with CRY1. Lys703 is covalently cross-linked (Glycyl lysine isopeptide (Lys-Gly) (interchain with G-Cter in SUMO)).

It belongs to the nuclear hormone receptor family. NR3 subfamily. As to quaternary structure, heteromultimeric cytoplasmic complex with HSP90AA1, HSPA1A/HSPA1B, and FKBP5 or another immunophilin such as PPID, STIP1, or the immunophilin homolog PPP5C. Upon ligand binding FKBP5 dissociates from the complex and FKBP4 takes its place, thereby linking the complex to dynein and mediating transport to the nucleus, where the complex dissociates. Probably forms a complex composed of chaperones HSP90 and HSP70, co-chaperones CDC37, PPP5C, TSC1 and client protein TSC2, CDK4, AKT, RAF1 and NR3C1; this complex does not contain co-chaperones STIP1/HOP and PTGES3/p23. Directly interacts with UNC45A. Binds to DNA as a homodimer, and as heterodimer with NR3C2 or the retinoid X receptor. Binds STAT5A and STAT5B homodimers and heterodimers. Interacts with NRIP1, POU2F1, POU2F2 and TRIM28. Interacts with several coactivator complexes, including the SMARCA4 complex, CREBBP/EP300, TADA2L (Ada complex) and p160 coactivators such as NCOA2 and NCOA6. Interaction with BAG1 inhibits transactivation. Interacts with HEXIM1 and TGFB1I1. Interacts with NCOA1. Interacts with NCOA3, SMARCA4, SMARCC1, SMARCD1, and SMARCE1. Interacts with CLOCK, CRY1 and CRY2 in a ligand-dependent fashion. Interacts with CIART. Interacts with RWDD3. Interacts with UBE2I/UBC9 and this interaction is enhanced in the presence of RWDD3. Interacts with GRIP1. Interacts with NR4A3 (via nuclear receptor DNA-binding domain), represses transcription activity of NR4A3 on the POMC promoter Nur response element (NurRE). Directly interacts with PNRC2 to attract and form a complex with UPF1 and DCP1A; the interaction leads to rapid mRNA degradation. Interacts with GSK3B. Interacts with FNIP1 and FNIP2. Interacts (via C-terminus) with HNRNPU (via C-terminus). Interacts with MCM3AP. Interacts (via domain NR LBD) with HSP90AA1 and HSP90AB1. In the absence of hormonal ligand, interacts with TACC1. Interacts (via NR LBD domain) with ZNF764 (via KRAB domain); the interaction regulates transcription factor activity of NR3C1 by directing its actions toward certain biologic pathways. In terms of processing, acetylation by CLOCK reduces its binding to glucocorticoid response elements and its transcriptional activity. Post-translationally, increased proteasome-mediated degradation in response to glucocorticoids. Phosphorylated in the absence of hormone; becomes hyperphosphorylated in the presence of glucocorticoid. The Ser-203, Ser-226 and Ser-404-phosphorylated forms are mainly cytoplasmic, and the Ser-211-phosphorylated form is nuclear. Phosphorylation at Ser-211 increases transcriptional activity. Phosphorylation at Ser-203, Ser-226 and Ser-404 decreases signaling capacity. Phosphorylation at Ser-404 may protect from glucocorticoid-induced apoptosis. Phosphorylation at Ser-203 and Ser-211 is not required in regulation of chromosome segregation. May be dephosphorylated by PPP5C, attenuates NR3C1 action. In terms of processing, ubiquitinated by UBR5, leading to its degradation: UBR5 specifically recognizes and binds ligand-bound NR3C1 when it is not associated with coactivators (NCOAs). In presence of NCOAs, the UBR5-degron is not accessible, preventing its ubiquitination and degradation. Post-translationally, sumoylation at Lys-277 and Lys-293 negatively regulates its transcriptional activity. Sumoylation at Lys-703 positively regulates its transcriptional activity in the presence of RWDD3. Sumoylation at Lys-277 and Lys-293 is dispensable whereas sumoylation at Lys-703 is critical for the stimulatory effect of RWDD3 on its transcriptional activity. Heat shock increases sumoylation in a RWDD3-dependent manner.

Its subcellular location is the cytoplasm. The protein resides in the nucleus. It localises to the mitochondrion. The protein localises to the cytoskeleton. It is found in the spindle. Its subcellular location is the microtubule organizing center. The protein resides in the centrosome. It localises to the chromosome. The protein localises to the nucleoplasm. Receptor for glucocorticoids (GC). Has a dual mode of action: as a transcription factor that binds to glucocorticoid response elements (GRE), both for nuclear and mitochondrial DNA, and as a modulator of other transcription factors. Affects inflammatory responses, cellular proliferation and differentiation in target tissues. Involved in chromatin remodeling. Plays a role in rapid mRNA degradation by binding to the 5' UTR of target mRNAs and interacting with PNRC2 in a ligand-dependent manner which recruits the RNA helicase UPF1 and the mRNA-decapping enzyme DCP1A, leading to RNA decay. Could act as a coactivator for STAT5-dependent transcription upon growth hormone (GH) stimulation and could reveal an essential role of hepatic GR in the control of body growth. Mediates glucocorticoid-induced apoptosis. Promotes accurate chromosome segregation during mitosis. May act as a tumor suppressor. May play a negative role in adipogenesis through the regulation of lipolytic and antilipogenic gene expression. The chain is Glucocorticoid receptor (NR3C1) from Pongo abelii (Sumatran orangutan).